The primary structure comprises 195 residues: Imidazoleglycerol-phosphate dehydratase (195 aa).

This sequence belongs to the imidazoleglycerol-phosphate dehydratase family.

The protein resides in the cytoplasm. The enzyme catalyses D-erythro-1-(imidazol-4-yl)glycerol 3-phosphate = 3-(imidazol-4-yl)-2-oxopropyl phosphate + H2O. It functions in the pathway amino-acid biosynthesis; L-histidine biosynthesis; L-histidine from 5-phospho-alpha-D-ribose 1-diphosphate: step 6/9. In Bacillus cytotoxicus (strain DSM 22905 / CIP 110041 / 391-98 / NVH 391-98), this protein is Imidazoleglycerol-phosphate dehydratase.